Reading from the N-terminus, the 697-residue chain is Potassium-transporting ATPase ATP-binding subunit (697 aa).

A run of 4 helical transmembrane segments spans residues 36–56 (VMFV…RDLI), 66–86 (LQII…EAVA), 218–238 (IALN…TATI), and 253–273 (VLVA…LSAI). Asp-306 serves as the catalytic 4-aspartylphosphate intermediate. Residues Asp-343, Glu-347, 376–383 (FTAQTRMS), and Lys-394 each bind ATP. Mg(2+) contacts are provided by Asp-526 and Asp-530. 3 helical membrane passes run 595-615 (YFAI…QSTG), 631-651 (AILS…PLSL), and 669-689 (LLVY…IIDM).

Belongs to the cation transport ATPase (P-type) (TC 3.A.3) family. Type IA subfamily. In terms of assembly, the system is composed of three essential subunits: KdpA, KdpB and KdpC.

The protein localises to the cell inner membrane. It carries out the reaction K(+)(out) + ATP + H2O = K(+)(in) + ADP + phosphate + H(+). Its function is as follows. Part of the high-affinity ATP-driven potassium transport (or Kdp) system, which catalyzes the hydrolysis of ATP coupled with the electrogenic transport of potassium into the cytoplasm. This subunit is responsible for energy coupling to the transport system and for the release of the potassium ions to the cytoplasm. This Mesorhizobium japonicum (strain LMG 29417 / CECT 9101 / MAFF 303099) (Mesorhizobium loti (strain MAFF 303099)) protein is Potassium-transporting ATPase ATP-binding subunit.